Consider the following 239-residue polypeptide: RING finger protein 151 (239 aa).

Residues Cys-20–Arg-58 form an RING-type zinc finger. The segment at Glu-101 to Glu-156 adopts a TRAF-type zinc-finger fold.

In terms of assembly, interacts with DTNBP1. As to expression, expressed in testis. Expressed in round spermatids of the stages VII-VIII semniniferous tubules. Expressed in elongating spermatids of stages VIII-IX seminiferous tubules (at protein level).

The protein resides in the cytoplasm. Its subcellular location is the nucleus. Its function is as follows. May be involved in acrosome formation of spermatids. This chain is RING finger protein 151 (Rnf151), found in Mus musculus (Mouse).